The sequence spans 333 residues: 6-phosphogluconolactonase (333 aa).

The protein belongs to the cycloisomerase 2 family.

It catalyses the reaction 6-phospho-D-glucono-1,5-lactone + H2O = 6-phospho-D-gluconate + H(+). Its pathway is carbohydrate degradation; pentose phosphate pathway; D-ribulose 5-phosphate from D-glucose 6-phosphate (oxidative stage): step 2/3. Its function is as follows. Catalyzes the hydrolysis of 6-phosphogluconolactone to 6-phosphogluconate. The polypeptide is 6-phosphogluconolactonase (Buchnera aphidicola subsp. Schizaphis graminum (strain Sg)).